Consider the following 354-residue polypeptide: NADPH dehydrogenase (354 aa).

Residues S23, P24, C26, A58, and Q100 each coordinate FMN. Y182 acts as the Proton donor in catalysis. Positions 230, 301, 323, and 324 each coordinate FMN.

Belongs to the NADH:flavin oxidoreductase/NADH oxidase family. NamA subfamily. Homodimer. Behaves as an active monomer in solution while in the crystal packing assembles following the classical dimeric architecture of other thermophilic-like ene-reductases. FMN serves as cofactor.

It catalyses the reaction A + NADPH + H(+) = AH2 + NADP(+). In terms of biological role, ene-reductase that catalyzes the stereoselective reduction of activated C-C double bonds. Shows very good activity with 4-ketoisophorone, 2-cyclohexen-1-one and 1-octen-3-one, and low activity with maleimide, 2-methyl-pentenal, 2-methyl-cyclohexen-1-one, 2-cyclopenten-1-one and trans-2-hexen-1-al. Shows the highest catalytic efficiency with ketoisophorone. Exhibits a restricted substrate spectrum with generally lower activities compared to other ene-reductases. This is NADPH dehydrogenase from Chloroflexus aggregans (strain MD-66 / DSM 9485).